The sequence spans 359 residues: tRNA-specific 2-thiouridylase MnmA (359 aa).

Residues 9–16 and M35 contribute to the ATP site; that span reads GISGGVDS. Residues 95-97 form an interaction with target base in tRNA region; that stretch reads NPD. C100 functions as the Nucleophile in the catalytic mechanism. A disulfide bridge links C100 with C197. G124 is a binding site for ATP. The interaction with tRNA stretch occupies residues 147–149; it reads KDQ. The active-site Cysteine persulfide intermediate is C197. The tract at residues 309–310 is interaction with tRNA; it reads RY.

This sequence belongs to the MnmA/TRMU family.

The protein resides in the cytoplasm. The enzyme catalyses S-sulfanyl-L-cysteinyl-[protein] + uridine(34) in tRNA + AH2 + ATP = 2-thiouridine(34) in tRNA + L-cysteinyl-[protein] + A + AMP + diphosphate + H(+). In terms of biological role, catalyzes the 2-thiolation of uridine at the wobble position (U34) of tRNA, leading to the formation of s(2)U34. This chain is tRNA-specific 2-thiouridylase MnmA, found in Francisella tularensis subsp. tularensis (strain WY96-3418).